A 205-amino-acid polypeptide reads, in one-letter code: 3-demethoxyubiquinol 3-hydroxylase (205 aa).

Fe cation-binding residues include Glu54, Glu84, His87, Glu136, Glu168, and His171.

It belongs to the COQ7 family. It depends on Fe cation as a cofactor.

It localises to the cell membrane. The catalysed reaction is a 5-methoxy-2-methyl-3-(all-trans-polyprenyl)benzene-1,4-diol + AH2 + O2 = a 3-demethylubiquinol + A + H2O. The protein operates within cofactor biosynthesis; ubiquinone biosynthesis. Its function is as follows. Catalyzes the hydroxylation of 2-nonaprenyl-3-methyl-6-methoxy-1,4-benzoquinol during ubiquinone biosynthesis. The protein is 3-demethoxyubiquinol 3-hydroxylase of Paracidovorax citrulli (strain AAC00-1) (Acidovorax citrulli).